Reading from the N-terminus, the 69-residue chain is Small ribosomal subunit protein uS14 (69 aa).

Residues Cys-33, Cys-36, Cys-51, and Cys-54 each contribute to the Zn(2+) site.

This sequence belongs to the universal ribosomal protein uS14 family. Zinc-binding uS14 subfamily. As to quaternary structure, part of the 30S ribosomal subunit. Zn(2+) serves as cofactor.

Binds 16S rRNA, required for the assembly of 30S particles. The polypeptide is Small ribosomal subunit protein uS14 (Nanoarchaeum equitans (strain Kin4-M)).